Reading from the N-terminus, the 401-residue chain is Carbamoyl phosphate synthase small chain (401 aa).

The CPSase stretch occupies residues 1 to 203 (MTATPAWTIQ…EGYSTLGETD (203 aa)). S56, G255, and G257 together coordinate L-glutamine. Positions 207–395 (HVVALDYGVK…LNLIREKKGE (189 aa)) constitute a Glutamine amidotransferase type-1 domain. C284 acts as the Nucleophile in catalysis. Positions 285, 288, 326, 328, and 329 each coordinate L-glutamine. Catalysis depends on residues H368 and E370.

The protein belongs to the CarA family. As to quaternary structure, composed of two chains; the small (or glutamine) chain promotes the hydrolysis of glutamine to ammonia, which is used by the large (or ammonia) chain to synthesize carbamoyl phosphate. Tetramer of heterodimers (alpha,beta)4.

It catalyses the reaction hydrogencarbonate + L-glutamine + 2 ATP + H2O = carbamoyl phosphate + L-glutamate + 2 ADP + phosphate + 2 H(+). The enzyme catalyses L-glutamine + H2O = L-glutamate + NH4(+). Its pathway is amino-acid biosynthesis; L-arginine biosynthesis; carbamoyl phosphate from bicarbonate: step 1/1. It participates in pyrimidine metabolism; UMP biosynthesis via de novo pathway; (S)-dihydroorotate from bicarbonate: step 1/3. In terms of biological role, small subunit of the glutamine-dependent carbamoyl phosphate synthetase (CPSase). CPSase catalyzes the formation of carbamoyl phosphate from the ammonia moiety of glutamine, carbonate, and phosphate donated by ATP, constituting the first step of 2 biosynthetic pathways, one leading to arginine and/or urea and the other to pyrimidine nucleotides. The small subunit (glutamine amidotransferase) binds and cleaves glutamine to supply the large subunit with the substrate ammonia. This chain is Carbamoyl phosphate synthase small chain, found in Rhizobium meliloti (strain 1021) (Ensifer meliloti).